The sequence spans 141 residues: Large ribosomal subunit protein uL11 (141 aa).

It belongs to the universal ribosomal protein uL11 family. In terms of assembly, part of the ribosomal stalk of the 50S ribosomal subunit. Interacts with L10 and the large rRNA to form the base of the stalk. L10 forms an elongated spine to which L12 dimers bind in a sequential fashion forming a multimeric L10(L12)X complex. In terms of processing, one or more lysine residues are methylated.

Forms part of the ribosomal stalk which helps the ribosome interact with GTP-bound translation factors. The protein is Large ribosomal subunit protein uL11 of Trichlorobacter lovleyi (strain ATCC BAA-1151 / DSM 17278 / SZ) (Geobacter lovleyi).